The chain runs to 484 residues: Alginate production protein AlgE (484 aa).

Positions 1–25 (MSRKQRISAGLGLGASLLCCNPLFA) are cleaved as a signal peptide. Positions 93–103 (TDPTDPNEEPG) are enriched in acidic residues. The tract at residues 93 to 118 (TDPTDPNEEPGGDPANGFSRDSSRDP) is disordered.

This sequence belongs to the AlgE family.

It localises to the cell outer membrane. It participates in glycan biosynthesis; alginate biosynthesis. Its function is as follows. Has non-porin-like, channel-forming properties and probably functions as an alginate permeability pore. This chain is Alginate production protein AlgE (algE), found in Azotobacter vinelandii.